The primary structure comprises 681 residues: Cadmium, zinc and cobalt-transporting ATPase (681 aa).

The HMA domain occupies 1–66 (MQKYHFTGLD…LEPDMELSEQ (66 aa)). Topologically, residues 1 to 72 (MQKYHFTGLD…LSEQVQSEAK (72 aa)) are cytoplasmic. 2 residues coordinate Cd(2+): Cys-11 and Cys-14. Co(2+) is bound by residues Cys-11 and Cys-14. The Zn(2+) site is built by Cys-11 and Cys-14. A helical membrane pass occupies residues 73 to 92 (PSAIPLLLSVVLYLIAVATI). The Extracellular portion of the chain corresponds to 93-102 (HFSAQNWALH). The helical transmembrane segment at 103-124 (LSYALLAGVYLVAGKDVFLGAL) threads the bilayer. Residues 125–131 (RAIRNKQ) lie on the Cytoplasmic side of the membrane. The chain crosses the membrane as a helical span at residues 132-151 (FFDENTLMLSATIAAFGVGA). The Extracellular portion of the chain corresponds to 152 to 154 (HEE). The chain crosses the membrane as a helical span at residues 155 to 174 (AVSIMVFYSAGEFLQQLAIA). Residues 175–308 (RSKQSLHALL…ITTFARYYTP (134 aa)) lie on the Cytoplasmic side of the membrane. The helical transmembrane segment at 309–327 (AVFAIALLIALVPPLLGHG) threads the bilayer. The Extracellular segment spans residues 328-332 (DFDTW). The chain crosses the membrane as a helical span at residues 333–350 (IYRGLFALMVSCPCALVI). Residues 351-630 (SVPLGYFGGV…VFKIAKKTKR (280 aa)) are Cytoplasmic-facing. Asp-388 (4-aspartylphosphate intermediate) is an active-site residue. 2 residues coordinate Mg(2+): Asp-578 and Asp-582. Residues 631–652 (IIIENIIFALAIKAMFIVLGLS) traverse the membrane as a helical segment. Over 653 to 660 (GDASLWEA) the chain is Extracellular. Residues 661 to 676 (VLGDVGVTLIALANSM) form a helical membrane-spanning segment. Residues 677–681 (RTMRI) are Cytoplasmic-facing.

Belongs to the cation transport ATPase (P-type) (TC 3.A.3) family. Type IB subfamily.

The protein localises to the cell membrane. The catalysed reaction is Zn(2+)(in) + ATP + H2O = Zn(2+)(out) + ADP + phosphate + H(+). It carries out the reaction Cd(2+)(in) + ATP + H2O = Cd(2+)(out) + ADP + phosphate + H(+). Functionally, couples the hydrolysis of ATP with the transport of cadmium, zinc and cobalt out of the cell. This Helicobacter felis protein is Cadmium, zinc and cobalt-transporting ATPase (cadA).